Consider the following 150-residue polypeptide: Catabolic 3-dehydroquinase 1 (150 aa).

Residue Y24 is the Proton acceptor of the active site. Residues N75, H81, and D88 each coordinate substrate. The Proton donor role is filled by H101. Substrate contacts are provided by residues 102–103 and R112; that span reads VS.

This sequence belongs to the type-II 3-dehydroquinase family. Homododecamer. Adopts a ring-like structure, composed of an arrangement of two hexameric rings stacked on top of one another.

It catalyses the reaction 3-dehydroquinate = 3-dehydroshikimate + H2O. Its pathway is aromatic compound metabolism; 3,4-dihydroxybenzoate biosynthesis; 3,4-dihydroxybenzoate from 3-dehydroquinate: step 1/2. Is involved in the catabolism of quinate. Allows the utilization of quinate as carbon source via the beta-ketoadipate pathway. This Aspergillus fumigatus (strain ATCC MYA-4609 / CBS 101355 / FGSC A1100 / Af293) (Neosartorya fumigata) protein is Catabolic 3-dehydroquinase 1.